Consider the following 79-residue polypeptide: ATP synthase subunit c (79 aa).

2 helical membrane-spanning segments follow: residues methionine 11 to leucine 31 and phenylalanine 53 to tyrosine 73.

It belongs to the ATPase C chain family. F-type ATPases have 2 components, F(1) - the catalytic core - and F(0) - the membrane proton channel. F(1) has five subunits: alpha(3), beta(3), gamma(1), delta(1), epsilon(1). F(0) has three main subunits: a(1), b(2) and c(10-14). The alpha and beta chains form an alternating ring which encloses part of the gamma chain. F(1) is attached to F(0) by a central stalk formed by the gamma and epsilon chains, while a peripheral stalk is formed by the delta and b chains.

Its subcellular location is the cell inner membrane. Its function is as follows. F(1)F(0) ATP synthase produces ATP from ADP in the presence of a proton or sodium gradient. F-type ATPases consist of two structural domains, F(1) containing the extramembraneous catalytic core and F(0) containing the membrane proton channel, linked together by a central stalk and a peripheral stalk. During catalysis, ATP synthesis in the catalytic domain of F(1) is coupled via a rotary mechanism of the central stalk subunits to proton translocation. In terms of biological role, key component of the F(0) channel; it plays a direct role in translocation across the membrane. A homomeric c-ring of between 10-14 subunits forms the central stalk rotor element with the F(1) delta and epsilon subunits. In Pectobacterium atrosepticum (strain SCRI 1043 / ATCC BAA-672) (Erwinia carotovora subsp. atroseptica), this protein is ATP synthase subunit c.